The sequence spans 635 residues: 1-deoxy-D-xylulose-5-phosphate synthase (635 aa).

Thiamine diphosphate contacts are provided by residues His-77 and 118–120; that span reads GHA. Asp-150 provides a ligand contact to Mg(2+). Thiamine diphosphate-binding positions include 151-152, Asn-179, Tyr-290, and Glu-372; that span reads AS. A Mg(2+)-binding site is contributed by Asn-179.

Belongs to the transketolase family. DXPS subfamily. In terms of assembly, homodimer. The cofactor is Mg(2+). Thiamine diphosphate serves as cofactor.

It catalyses the reaction D-glyceraldehyde 3-phosphate + pyruvate + H(+) = 1-deoxy-D-xylulose 5-phosphate + CO2. Its pathway is metabolic intermediate biosynthesis; 1-deoxy-D-xylulose 5-phosphate biosynthesis; 1-deoxy-D-xylulose 5-phosphate from D-glyceraldehyde 3-phosphate and pyruvate: step 1/1. In terms of biological role, catalyzes the acyloin condensation reaction between C atoms 2 and 3 of pyruvate and glyceraldehyde 3-phosphate to yield 1-deoxy-D-xylulose-5-phosphate (DXP). This chain is 1-deoxy-D-xylulose-5-phosphate synthase, found in Leptospira borgpetersenii serovar Hardjo-bovis (strain JB197).